We begin with the raw amino-acid sequence, 193 residues long: Ion-translocating oxidoreductase complex subunit A (193 aa).

Helical transmembrane passes span 4-24 (LLLILIGAVLVNNFVLARFLG), 39-59 (LGMGMAVTFVMVVASGCTWVL), 72-92 (LQTIAFILVIATLVQMVEMIV), 102-122 (SLGIFLPLITTNCAVLGLAVL), 134-154 (LVFAFGGAVGFTLALVLFAGL), and 171-191 (PIELITAGLLALAFMGFAGLV).

This sequence belongs to the NqrDE/RnfAE family. As to quaternary structure, the complex is composed of six subunits: RnfA, RnfB, RnfC, RnfD, RnfE and RnfG.

The protein localises to the cell inner membrane. Functionally, part of a membrane-bound complex that couples electron transfer with translocation of ions across the membrane. The sequence is that of Ion-translocating oxidoreductase complex subunit A from Syntrophotalea carbinolica (strain DSM 2380 / NBRC 103641 / GraBd1) (Pelobacter carbinolicus).